The primary structure comprises 393 residues: Phosphopentomutase (393 aa).

The Mn(2+) site is built by Asp-13, Asp-286, His-291, Asp-327, His-328, and His-339.

This sequence belongs to the phosphopentomutase family. It depends on Mn(2+) as a cofactor.

It is found in the cytoplasm. The enzyme catalyses 2-deoxy-alpha-D-ribose 1-phosphate = 2-deoxy-D-ribose 5-phosphate. It catalyses the reaction alpha-D-ribose 1-phosphate = D-ribose 5-phosphate. Its pathway is carbohydrate degradation; 2-deoxy-D-ribose 1-phosphate degradation; D-glyceraldehyde 3-phosphate and acetaldehyde from 2-deoxy-alpha-D-ribose 1-phosphate: step 1/2. Isomerase that catalyzes the conversion of deoxy-ribose 1-phosphate (dRib-1-P) and ribose 1-phosphate (Rib-1-P) to deoxy-ribose 5-phosphate (dRib-5-P) and ribose 5-phosphate (Rib-5-P), respectively. This chain is Phosphopentomutase, found in Symbiobacterium thermophilum (strain DSM 24528 / JCM 14929 / IAM 14863 / T).